The chain runs to 199 residues: Recombination protein RecR (199 aa).

A C4-type zinc finger spans residues 57–72 (CSVCGNITEQDPCAIC). The Toprim domain maps to 80 to 176 (STIMVVEEAK…KVTRLAAGLA (97 aa)).

This sequence belongs to the RecR family.

Its function is as follows. May play a role in DNA repair. It seems to be involved in an RecBC-independent recombinational process of DNA repair. It may act with RecF and RecO. The chain is Recombination protein RecR from Lactobacillus delbrueckii subsp. bulgaricus (strain ATCC BAA-365 / Lb-18).